A 568-amino-acid chain; its full sequence is MVSILAIRTFNPLGHFVSTQCVRAYAINSVRAGSKSSSVRAGSKNDTTRASSKKNKAGKSKLQLSARFKQNANKSQKADKFKSQKQFKYGLYGGLKENENKFLETNANLVEKITEFEELKLLPEVRKHVINLIKKDSLNTTEEIHPSPIQTIAIKRLSKNLMEPKLQVHAIAAETGSGKTMAYCAPLLDYLKRQEIETPEKWESIKDKAIIRSVILVPTLELVDQIYTTLTCIPDTLGIHVHKWTTGVDYQQLLENLKSRTDILITTPSKLLSLQRVRMISRADLILKRIEFVVLDEADTLLDKSWLEDTHKALKAMSDVNHLVLCSATIPNEFDRTMTKMFPNAIPLTTPRLHKLPKGINFRIINAAVSPYKGSKIKALAQTLYAIAYDGTDPGFEKRCIVFINEKKNVDNVVQKLRNEYGHDVVGLTGDMEGRTRLELIRPFISPPEKLTEQEKQIDKDLNDQETVNISGSNISIGNIENSNKASNFIPKLRVLVTTDLLARGLNFKGVRNVILYDVPITAIDLVHRAGRTARMRQSGRVFMIIDKKTQSWAKAVPTILKKNKALT.

The N-terminal 50 residues, 1–50, are a transit peptide targeting the mitochondrion; it reads MVSILAIRTFNPLGHFVSTQCVRAYAINSVRAGSKSSSVRAGSKNDTTRA. The span at 36–49 shows a compositional bias: polar residues; sequence SSSVRAGSKNDTTR. The disordered stretch occupies residues 36–64; it reads SSSVRAGSKNDTTRASSKKNKAGKSKLQL. Positions 143-150 match the Q motif motif; sequence EIHPSPIQ. The Helicase ATP-binding domain occupies 160–348; it reads NLMEPKLQVH…TKMFPNAIPL (189 aa). 173–180 contacts ATP; the sequence is AETGSGKT. The DEAD box motif lies at 296-299; that stretch reads DEAD. The Helicase C-terminal domain occupies 379 to 568; the sequence is ALAQTLYAIA…TILKKNKALT (190 aa).

This sequence belongs to the DEAD box helicase family. MRH4 subfamily.

The protein resides in the mitochondrion. It carries out the reaction ATP + H2O = ADP + phosphate + H(+). Its function is as follows. ATP-binding RNA helicase involved in mitochondrial RNA metabolism. Required for maintenance of mitochondrial DNA. The polypeptide is ATP-dependent RNA helicase MRH4, mitochondrial (MRH4) (Candida glabrata (strain ATCC 2001 / BCRC 20586 / JCM 3761 / NBRC 0622 / NRRL Y-65 / CBS 138) (Yeast)).